Reading from the N-terminus, the 34-residue chain is Trypsin inhibitor 1 (34 aa).

The cyclopeptide (Ser-Gly) cross-link spans 1-34; the sequence is SGSDGGVCPKILQRCRRDSDCPGACICRGNGYCG. 3 disulfide bridges follow: Cys-8–Cys-25, Cys-15–Cys-27, and Cys-21–Cys-33.

Post-translationally, this is a cyclic peptide.

It is found in the secreted. Inhibits trypsin; probably participates in a plant defense mechanism. The polypeptide is Trypsin inhibitor 1 (Momordica cochinchinensis (Spiny bitter cucumber)).